The primary structure comprises 215 residues: Ribose-5-phosphate isomerase A (215 aa).

Residues 26 to 29 (TGST), 79 to 82 (DGAD), and 92 to 95 (KGGG) contribute to the substrate site. Glu101 (proton acceptor) is an active-site residue. Lys119 lines the substrate pocket.

The protein belongs to the ribose 5-phosphate isomerase family. As to quaternary structure, homodimer.

The enzyme catalyses aldehydo-D-ribose 5-phosphate = D-ribulose 5-phosphate. Its pathway is carbohydrate degradation; pentose phosphate pathway; D-ribose 5-phosphate from D-ribulose 5-phosphate (non-oxidative stage): step 1/1. In terms of biological role, catalyzes the reversible conversion of ribose-5-phosphate to ribulose 5-phosphate. This is Ribose-5-phosphate isomerase A from Xanthomonas euvesicatoria pv. vesicatoria (strain 85-10) (Xanthomonas campestris pv. vesicatoria).